The sequence spans 383 residues: S-(hydroxymethyl)glutathione dehydrogenase (383 aa).

Cysteine 51 lines the Zn(2+) pocket. Histidine 52 is a binding site for NAD(+). Residues histidine 73, glutamate 74, cysteine 103, cysteine 106, cysteine 109, cysteine 117, and cysteine 180 each contribute to the Zn(2+) site. NAD(+)-binding positions include glycine 205 to glycine 210, aspartate 229, and isoleucine 298 to valine 300.

It belongs to the zinc-containing alcohol dehydrogenase family. Class-III subfamily. Zn(2+) is required as a cofactor.

It catalyses the reaction a primary alcohol + NAD(+) = an aldehyde + NADH + H(+). It carries out the reaction a secondary alcohol + NAD(+) = a ketone + NADH + H(+). The enzyme catalyses S-(hydroxymethyl)glutathione + NADP(+) = S-formylglutathione + NADPH + H(+). The catalysed reaction is S-(hydroxymethyl)glutathione + NAD(+) = S-formylglutathione + NADH + H(+). It catalyses the reaction S-nitrosoglutathione + NADH + H(+) = S-(hydroxysulfenamide)glutathione + NAD(+). Functionally, oxidizes long-chain alcohols and, in the presence of glutathione, is able to oxidize formaldehyde. Also acts as a S-nitroso-glutathione reductase by catalyzing the NADH-dependent reduction of S-nitrosoglutathione, thereby regulating protein S-nitrosylation. This is S-(hydroxymethyl)glutathione dehydrogenase (FDH1) from Aspergillus oryzae (strain ATCC 42149 / RIB 40) (Yellow koji mold).